The primary structure comprises 550 residues: Hydroxylamine reductase (550 aa).

The [2Fe-2S] cluster site is built by cysteine 3, cysteine 6, cysteine 18, and cysteine 25. 8 residues coordinate hybrid [4Fe-2O-2S] cluster: histidine 249, glutamate 273, cysteine 317, cysteine 405, cysteine 433, cysteine 458, glutamate 492, and lysine 494. Cysteine 405 bears the Cysteine persulfide mark.

The protein belongs to the HCP family. It depends on [2Fe-2S] cluster as a cofactor. Hybrid [4Fe-2O-2S] cluster is required as a cofactor.

It localises to the cytoplasm. The enzyme catalyses A + NH4(+) + H2O = hydroxylamine + AH2 + H(+). Its function is as follows. Catalyzes the reduction of hydroxylamine to form NH(3) and H(2)O. This chain is Hydroxylamine reductase, found in Salmonella choleraesuis (strain SC-B67).